Reading from the N-terminus, the 79-residue chain is Sulfur carrier protein TusA (79 aa).

Cys-15 (cysteine persulfide intermediate) is an active-site residue.

This sequence belongs to the sulfur carrier protein TusA family. In terms of assembly, interacts with IscS.

Its subcellular location is the cytoplasm. It participates in tRNA modification. Its function is as follows. Sulfur carrier protein involved in sulfur trafficking in the cell. Part of a sulfur-relay system required for 2-thiolation during synthesis of 2-thiouridine of the modified wobble base 5-methylaminomethyl-2-thiouridine (mnm(5)s(2)U) in tRNA. Interacts with IscS and stimulates its cysteine desulfurase activity. Accepts an activated sulfur from IscS, which is then transferred to TusD, and thus determines the direction of sulfur flow from IscS to 2-thiouridine formation. Also appears to be involved in sulfur transfer for the biosynthesis of molybdopterin. The sequence is that of Sulfur carrier protein TusA from Buchnera aphidicola subsp. Baizongia pistaciae (strain Bp).